We begin with the raw amino-acid sequence, 306 residues long: Putative F-box protein At1g47300 (306 aa).

The F-box domain occupies 1–45 (MISDSIPKELILEIMLRLPAKSIARFHCVSKQWASMLSRPYFTEL). Positions 235-278 (DPKLLESKEEEEEEEEEEEEEEEEEEEEEEEEEEEESKEREKEK) are disordered. Positions 242–270 (KEEEEEEEEEEEEEEEEEEEEEEEEEEEE) are enriched in acidic residues.

The polypeptide is Putative F-box protein At1g47300 (Arabidopsis thaliana (Mouse-ear cress)).